Here is a 47-residue protein sequence, read N- to C-terminus: PhoP/PhoQ regulator MgrB (47 aa).

Residues 6 to 26 (WVVLGIVVVVCLLLWAQVFNI) traverse the membrane as a helical segment.

Belongs to the MgrB family. May form homooligomers. Probably interacts with the periplasmic domain of PhoQ.

The protein localises to the cell inner membrane. PhoP-regulated transcription is redox-sensitive, being activated when the periplasm becomes more reducing. MgrB acts between DsbA/DsbB and PhoP/PhoQ in this pathway. Represses PhoP/PhoQ signaling, possibly by binding to the periplasmic domain of PhoQ, altering its activity and that of downstream effector PhoP. This chain is PhoP/PhoQ regulator MgrB, found in Salmonella gallinarum (strain 287/91 / NCTC 13346).